Consider the following 320-residue polypeptide: Glycerol-3-phosphate dehydrogenase [NAD(P)+] (320 aa).

NADPH is bound by residues Ser-14, Phe-15, Arg-35, and Lys-109. Residues Lys-109 and Gly-137 each coordinate sn-glycerol 3-phosphate. Residue Ala-141 participates in NADPH binding. Positions 192, 248, 258, 259, and 260 each coordinate sn-glycerol 3-phosphate. Residue Lys-192 is the Proton acceptor of the active site. Arg-259 contributes to the NADPH binding site. The NADPH site is built by Leu-283 and Glu-285.

The protein belongs to the NAD-dependent glycerol-3-phosphate dehydrogenase family.

The protein resides in the cytoplasm. It carries out the reaction sn-glycerol 3-phosphate + NAD(+) = dihydroxyacetone phosphate + NADH + H(+). The catalysed reaction is sn-glycerol 3-phosphate + NADP(+) = dihydroxyacetone phosphate + NADPH + H(+). It participates in membrane lipid metabolism; glycerophospholipid metabolism. In terms of biological role, catalyzes the reduction of the glycolytic intermediate dihydroxyacetone phosphate (DHAP) to sn-glycerol 3-phosphate (G3P), the key precursor for phospholipid synthesis. The protein is Glycerol-3-phosphate dehydrogenase [NAD(P)+] of Rickettsia typhi (strain ATCC VR-144 / Wilmington).